Here is a 428-residue protein sequence, read N- to C-terminus: Enolase (428 aa).

Gln-163 lines the (2R)-2-phosphoglycerate pocket. The Proton donor role is filled by Glu-205. The Mg(2+) site is built by Asp-242, Glu-285, and Asp-312. (2R)-2-phosphoglycerate contacts are provided by Lys-337, Arg-366, Ser-367, and Lys-388. Residue Lys-337 is the Proton acceptor of the active site.

It belongs to the enolase family. In terms of assembly, component of the RNA degradosome, a multiprotein complex involved in RNA processing and mRNA degradation. Mg(2+) serves as cofactor.

The protein resides in the cytoplasm. It localises to the secreted. It is found in the cell surface. The enzyme catalyses (2R)-2-phosphoglycerate = phosphoenolpyruvate + H2O. The protein operates within carbohydrate degradation; glycolysis; pyruvate from D-glyceraldehyde 3-phosphate: step 4/5. In terms of biological role, catalyzes the reversible conversion of 2-phosphoglycerate (2-PG) into phosphoenolpyruvate (PEP). It is essential for the degradation of carbohydrates via glycolysis. The protein is Enolase of Halorhodospira halophila (strain DSM 244 / SL1) (Ectothiorhodospira halophila (strain DSM 244 / SL1)).